We begin with the raw amino-acid sequence, 342 residues long: MDVLKSEILRKRQLVEDRNLLVENKKYFKRSELAKKEEEAYFERCGYKIQPKDEDQKPLTSSNPVLELELAEEKLPMTLSRQEVIRRLRERGEPIRLFGETDYDAFQRLRKIEILTPEVNKGLRNDLKAALDKIDQQYLNELVGGQEPGEEDTQNDLKVHEENTTIEELEALGESLGKGDDHKDMDIITKFLKFLLGVWAKELNAREDYVKRSVQGKLNSATQKQTESYLRPLFRKLRKRNLPADIKESITDIIKFMLQREYVKANDAYLQMAIGNAPWPIGVTMVGIHARTGREKIFSKHVAHVLNDETQRKYIQGLKRLMTICQKHFPTDPSKCVEYNAL.

Met-1 is modified (N-acetylmethionine).

Belongs to the PRP18 family. Heterodimer with PPIH. Interacts with PRPF4 and with the spliceosome. Part of a complex containing U4/U6 snRNPs.

It localises to the nucleus speckle. Functionally, participates in the second step of pre-mRNA splicing. In Bos taurus (Bovine), this protein is Pre-mRNA-splicing factor 18 (PRPF18).